The primary structure comprises 269 residues: Phosphatidate cytidylyltransferase (269 aa).

8 helical membrane passes run 13–33, 50–70, 81–101, 110–130, 138–158, 180–200, 201–221, and 247–267; these read LAAI…TILI, LKLV…FLLP, ISKM…TVLV, VGFI…FIEI, LTYI…AYFV, FAGG…VAQL, PIPY…GQLG, and ILDR…LLAL.

It belongs to the CDS family.

The protein localises to the cell membrane. It carries out the reaction a 1,2-diacyl-sn-glycero-3-phosphate + CTP + H(+) = a CDP-1,2-diacyl-sn-glycerol + diphosphate. It participates in phospholipid metabolism; CDP-diacylglycerol biosynthesis; CDP-diacylglycerol from sn-glycerol 3-phosphate: step 3/3. The sequence is that of Phosphatidate cytidylyltransferase (cdsA) from Bacillus subtilis (strain 168).